We begin with the raw amino-acid sequence, 155 residues long: 6,7-dimethyl-8-ribityllumazine synthase (155 aa).

5-amino-6-(D-ribitylamino)uracil-binding positions include Phe-18, 49–51 (ALE), and 75–77 (CVI). (2S)-2-hydroxy-3-oxobutyl phosphate is bound at residue 80–81 (ET). The Proton donor role is filled by His-83. Asn-108 is a binding site for 5-amino-6-(D-ribitylamino)uracil. Residue Arg-122 participates in (2S)-2-hydroxy-3-oxobutyl phosphate binding.

This sequence belongs to the DMRL synthase family.

The catalysed reaction is (2S)-2-hydroxy-3-oxobutyl phosphate + 5-amino-6-(D-ribitylamino)uracil = 6,7-dimethyl-8-(1-D-ribityl)lumazine + phosphate + 2 H2O + H(+). It functions in the pathway cofactor biosynthesis; riboflavin biosynthesis; riboflavin from 2-hydroxy-3-oxobutyl phosphate and 5-amino-6-(D-ribitylamino)uracil: step 1/2. Its function is as follows. Catalyzes the formation of 6,7-dimethyl-8-ribityllumazine by condensation of 5-amino-6-(D-ribitylamino)uracil with 3,4-dihydroxy-2-butanone 4-phosphate. This is the penultimate step in the biosynthesis of riboflavin. This is 6,7-dimethyl-8-ribityllumazine synthase from Bartonella henselae (strain ATCC 49882 / DSM 28221 / CCUG 30454 / Houston 1) (Rochalimaea henselae).